Consider the following 216-residue polypeptide: LexA repressor (216 aa).

Residues 28–48 (RAEIAAEFGFSSPNAAEEHLR) constitute a DNA-binding region (H-T-H motif). Active-site for autocatalytic cleavage activity residues include Ser-134 and Lys-171.

This sequence belongs to the peptidase S24 family. As to quaternary structure, homodimer.

The catalysed reaction is Hydrolysis of Ala-|-Gly bond in repressor LexA.. Functionally, represses a number of genes involved in the response to DNA damage (SOS response), including recA and lexA. In the presence of single-stranded DNA, RecA interacts with LexA causing an autocatalytic cleavage which disrupts the DNA-binding part of LexA, leading to derepression of the SOS regulon and eventually DNA repair. In Ralstonia pickettii (strain 12J), this protein is LexA repressor.